The following is a 138-amino-acid chain: Sporulation-specific protein 13 (138 aa).

A compositionally biased stretch (polar residues) spans 1–11 (MMSNSQISKLF). Residues 1–31 (MMSNSQISKLFSSISNKENSNENALKESTNK) are disordered. Residues 12–23 (SSISNKENSNEN) show a composition bias toward low complexity. Positions 16–104 (NKENSNENAL…KRELDYLRAK (89 aa)) form a coiled coil.

As to quaternary structure, interacts with spo2.

The protein localises to the cytoplasm. The protein resides in the cytoskeleton. Its subcellular location is the microtubule organizing center. It is found in the spindle pole body. Involved in sporulation. Plays a significant role in modification of the spindle pole body prior to spore formation and is required for initiating forespore membrane formation. The polypeptide is Sporulation-specific protein 13 (spo13) (Schizosaccharomyces pombe (strain 972 / ATCC 24843) (Fission yeast)).